The chain runs to 359 residues: AA9 family lytic polysaccharide monooxygenase C (359 aa).

Residues 1–16 form the signal peptide; that stretch reads MKTGSILAALVASASA. The Cu(2+) site is built by histidine 17 and histidine 99. Intrachain disulfides connect cysteine 55–cysteine 185 and cysteine 155–cysteine 243. Residues histidine 171 and glutamine 180 each coordinate O2. Tyrosine 182 provides a ligand contact to Cu(2+). N-linked (GlcNAc...) asparagine glycans are attached at residues asparagine 189 and asparagine 284. The interval 244 to 320 is disordered; it reads PAGGSGGSSP…NPQPTNGGNS (77 aa). The segment covering 251 to 296 has biased composition (low complexity); it reads SSPAPATTASTPKPTSASAPKPVSTTASTPKPTNGSGSGTGAAHST. Over residues 307–319 the composition is skewed to polar residues; that stretch reads TKASNPQPTNGGN. The CBM1 domain occupies 323–358; the sequence is RAAALYGQCGGKGWTGPTSCASGTCKFSNDWYSQCL.

This sequence belongs to the polysaccharide monooxygenase AA9 family. Cu(2+) is required as a cofactor.

Its subcellular location is the secreted. It catalyses the reaction [(1-&gt;4)-beta-D-glucosyl]n+m + reduced acceptor + O2 = 4-dehydro-beta-D-glucosyl-[(1-&gt;4)-beta-D-glucosyl]n-1 + [(1-&gt;4)-beta-D-glucosyl]m + acceptor + H2O.. Activity in inhibited by excessive amounts of H(2)O(2). Its function is as follows. Lytic polysaccharide monooxygenase (LPMO) that depolymerizes crystalline and amorphous polysaccharides via the oxidation of scissile alpha- or beta-(1-4)-glycosidic bonds, yielding C4 oxidation products. Catalysis by LPMOs requires the reduction of the active-site copper from Cu(II) to Cu(I) by a reducing agent and H(2)O(2) or O(2) as a cosubstrate. Degrades various hemicelluloses, in particular xyloglucan. Active on tamarind xyloglucan and konjac glucomannan. Acts on the glucose backbone of xyloglucan, accepting various substitutions (xylose, galactose) in almost allpositions. In contrast to all previously characterized LPMOs, which are active only on polysaccharides, is able to cleave soluble cello-oligosaccharides as short as a tetramer. The cello-oligosaccharide products released by this enzyme contain a C4 gemdiol/keto group at the non-reducing end. Binds to the inner wood cell wall layer and consumes enzymatically generated H(2)O(2). This is AA9 family lytic polysaccharide monooxygenase C (gh61-3) from Neurospora crassa (strain ATCC 24698 / 74-OR23-1A / CBS 708.71 / DSM 1257 / FGSC 987).